A 215-amino-acid polypeptide reads, in one-letter code: Pentapeptide repeat protein QnrB4 (215 aa).

Pentapeptide repeat domains follow at residues 25-104 and 117-191; these read TFFN…SFMN and ITNT…RGVD.

The protein belongs to the pentapeptide repeat protein family.

Its function is as follows. Probably plays a role in resistance to quinolone antibiotics. Only inhibits ATP-dependent DNA supercoiling by E.coli gyrase at high concentration (30 uM). Protects E.coli gyrase supercoiling activity from inhibition by fluoroquinolones (ciprofloxacin) at 0.1 uM, does not protect M.tuberculosis gyrase activity. This is Pentapeptide repeat protein QnrB4 from Escherichia coli.